An 80-amino-acid polypeptide reads, in one-letter code: Large ribosomal subunit protein bL31B (80 aa).

The protein belongs to the bacterial ribosomal protein bL31 family. Type B subfamily. Part of the 50S ribosomal subunit.

The sequence is that of Large ribosomal subunit protein bL31B from Methylobacillus flagellatus (strain ATCC 51484 / DSM 6875 / VKM B-1610 / KT).